Consider the following 160-residue polypeptide: MSIIKKPDLSDPDLRAKLAKGMGHNYYGEPAWPNDILYMFPICILGALGLIAGLAILDPAMIGEPADPFATPLEILPEWYLYPTFQILRILPNKLLGIAGMAAIPLGLMLVPFIESVNKFQNPFRRPIAMTVFLFGTAAALWLGAGATFPIDKSLTLGLF.

The next 3 membrane-spanning stretches (helical) occupy residues 36–56, 95–115, and 127–147; these read ILYMFPICILGALGLIAGLAI, LLGIAGMAAIPLGLMLVPFIE, and PIAMTVFLFGTAAALWLGAGA.

It belongs to the cytochrome b family. PetD subfamily. In terms of assembly, the 4 large subunits of the cytochrome b6-f complex are cytochrome b6, subunit IV (17 kDa polypeptide, PetD), cytochrome f and the Rieske protein, while the 4 small subunits are PetG, PetL, PetM and PetN. The complex functions as a dimer.

The protein localises to the cellular thylakoid membrane. Its function is as follows. Component of the cytochrome b6-f complex, which mediates electron transfer between photosystem II (PSII) and photosystem I (PSI), cyclic electron flow around PSI, and state transitions. This chain is Cytochrome b6-f complex subunit 4, found in Synechocystis sp. (strain ATCC 27184 / PCC 6803 / Kazusa).